We begin with the raw amino-acid sequence, 200 residues long: Cysteine dioxygenase type 1 (200 aa).

Fe cation-binding residues include His86, His88, and His140. The 3'-(S-cysteinyl)-tyrosine (Cys-Tyr) cross-link spans Cys93–Tyr157.

It belongs to the cysteine dioxygenase family. In terms of assembly, monomer. It depends on Fe cation as a cofactor. Ni(2+) is required as a cofactor. Zn(2+) serves as cofactor. In terms of processing, the thioether cross-link between Cys-93 and Tyr-157 plays a structural role through stabilizing the Fe(2+) ion, and prevents the production of highly damaging free hydroxyl radicals by holding the oxygen radical via hydroxyl hydrogen.

It carries out the reaction L-cysteine + O2 = 3-sulfino-L-alanine + H(+). The protein operates within organosulfur biosynthesis; taurine biosynthesis; hypotaurine from L-cysteine: step 1/2. Catalyzes the oxidation of cysteine to cysteine sulfinic acid with addition of molecular dioxygen. This is Cysteine dioxygenase type 1 (CDO1) from Bos taurus (Bovine).